The primary structure comprises 149 residues: SsrA-binding protein (149 aa).

Belongs to the SmpB family.

It is found in the cytoplasm. Required for rescue of stalled ribosomes mediated by trans-translation. Binds to transfer-messenger RNA (tmRNA), required for stable association of tmRNA with ribosomes. tmRNA and SmpB together mimic tRNA shape, replacing the anticodon stem-loop with SmpB. tmRNA is encoded by the ssrA gene; the 2 termini fold to resemble tRNA(Ala) and it encodes a 'tag peptide', a short internal open reading frame. During trans-translation Ala-aminoacylated tmRNA acts like a tRNA, entering the A-site of stalled ribosomes, displacing the stalled mRNA. The ribosome then switches to translate the ORF on the tmRNA; the nascent peptide is terminated with the 'tag peptide' encoded by the tmRNA and targeted for degradation. The ribosome is freed to recommence translation, which seems to be the essential function of trans-translation. The polypeptide is SsrA-binding protein (Carboxydothermus hydrogenoformans (strain ATCC BAA-161 / DSM 6008 / Z-2901)).